A 166-amino-acid chain; its full sequence is Cofilin-2 (166 aa).

One can recognise an ADF-H domain in the interval 4 to 153 (GVTVNDEVIK…KDRSTLGEKL (150 aa)). Position 24 is a phosphoserine (S24). The Nuclear localization signal signature appears at 30-34 (KKRKK).

Belongs to the actin-binding proteins ADF family. Post-translationally, the phosphorylation of Ser-24 may prevent recognition of the nuclear localization signal. Widely distributed in various tissues.

It is found in the nucleus matrix. It localises to the cytoplasm. The protein resides in the cytoskeleton. Controls reversibly actin polymerization and depolymerization in a pH-sensitive manner. It has the ability to bind G- and F-actin in a 1:1 ratio of cofilin to actin. It is the major component of intranuclear and cytoplasmic actin rods. This Gallus gallus (Chicken) protein is Cofilin-2 (CFL2).